A 372-amino-acid polypeptide reads, in one-letter code: Alanine dehydrogenase 2 (372 aa).

Residue H95 is part of the active site. NAD(+) is bound at residue 169-199; the sequence is KVTIIGGGQAGTNAAKIALGLGADVTILDVN.

It belongs to the AlaDH/PNT family.

It catalyses the reaction L-alanine + NAD(+) + H2O = pyruvate + NH4(+) + NADH + H(+). It functions in the pathway amino-acid degradation; L-alanine degradation via dehydrogenase pathway; NH(3) and pyruvate from L-alanine: step 1/1. Its function is as follows. May play a role in cell wall synthesis as L-alanine is an important constituent of the peptidoglycan layer. The sequence is that of Alanine dehydrogenase 2 (ald2) from Staphylococcus aureus (strain MRSA252).